The following is a 509-amino-acid chain: Flotillin-like protein FloT (509 aa).

Residues 1–3 are Cytoplasmic-facing; sequence MTM. Residues 4–24 lie within the membrane without spanning it; sequence PIIMIIGVVFFLLIALIAVFI. The Cytoplasmic portion of the chain corresponds to 25–509; the sequence is TKYRTAGPDE…KEAKTIQKSE (485 aa). Positions 119–301 are PHB domain; sequence AAEQFLGKSK…KIIERQKQIE (183 aa). Positions 203–509 are required for correct localization; sequence RIAQVKRDAD…KEAKTIQKSE (307 aa). 4 consecutive short sequence motifs (EA repeat) follow at residues 342–344, 357–360, 370–373, and 390–394; these read AEA, AEAE, and AEAEA. The tract at residues 485 to 509 is not required for correct localization; the sequence is KGNVKQSINELTNEIKEAKTIQKSE.

Belongs to the band 7/mec-2 family. Flotillin subfamily. As to quaternary structure, homooligomerizes. Oligomerizes in very large complexes in vitro. Interacts with FloA, FtsH, FtsX, OppA, SdhA and SecY in detergent-resistant membrane (DRM) fractions. Interacts with FtsH at midcell. Interacts with FloA. Interacts in vivo with KinC, FloA, FtsH and ResE. Interacts with ResE, colocalizes with ResE in FloT-only membrane rafts. Another study shows nearly complete colocalization with NfeD2, but only minor colocalization with FtsH or KinC.

Its subcellular location is the cell membrane. The protein resides in the membrane raft. Found in functional membrane microdomains (FMM) that may be equivalent to eukaryotic membrane rafts. FMMs are highly dynamic and increase in number as cells age. FloA and FloT function is partially redundant; double deletions have marked synthetic phenotypes. Flotillins are thought to be important factors in membrane fluidity, especially during periods of rapid growth in rich media. Whether specific proteins are associated with FMMs is controversial; in one study FloT rafts have been shown to include proteins involved in adaptation to stationary phase, while FloA-FloT rafts include proteins involved in differentiation including sporulation, biofilm formation and DNA uptake competence. Another (more finely resolved) study only showed association of NfeD2 with FloT rafts of all the proteins examined. Aids homooligomerization of KinC and KinD but not KinB, may prevent incorrect hetero-association of the above kinases. Simultaneous overexpression of both FloA and FloT leads to defects in cell division and differentiation, in part caused by stabilization of FtsH and its subsequent increased ability to degrade proteins. Cells make more biofilm, are about half as long, have less EzrA and more frequent Z-rings. Involved in spatial organization of membranes, perhaps recruiting proteins (e.g. NfeD2) to specific membrane regions. Plays a role in phosphorylation of master regulator Spo0A, an early sporulation event. Plays a non-redundant role with dynamin-like protein A (dynA) in membrane dynamics and cell shape. The protein is Flotillin-like protein FloT of Bacillus subtilis (strain 168).